Here is a 245-residue protein sequence, read N- to C-terminus: Phycocyanobilin:ferredoxin oxidoreductase (245 aa).

Belongs to the HY2 family.

It carries out the reaction (2R,3Z)-phycocyanobilin + 4 oxidized [2Fe-2S]-[ferredoxin] = biliverdin IXalpha + 4 reduced [2Fe-2S]-[ferredoxin] + 4 H(+). Its function is as follows. Catalyzes the four-electron reduction of biliverdin IX-alpha (2-electron reduction at both the A and D rings); the reaction proceeds via an isolatable 2-electron intermediate, 181,182-dihydrobiliverdin. This is Phycocyanobilin:ferredoxin oxidoreductase from Rippkaea orientalis (strain PCC 8801 / RF-1) (Cyanothece sp. (strain PCC 8801)).